Here is a 255-residue protein sequence, read N- to C-terminus: Acetylglutamate kinase (255 aa).

Substrate is bound by residues 40–41 (GG), R62, and N153.

This sequence belongs to the acetylglutamate kinase family. ArgB subfamily.

It is found in the cytoplasm. The enzyme catalyses N-acetyl-L-glutamate + ATP = N-acetyl-L-glutamyl 5-phosphate + ADP. The protein operates within amino-acid biosynthesis; L-arginine biosynthesis; N(2)-acetyl-L-ornithine from L-glutamate: step 2/4. Its function is as follows. Catalyzes the ATP-dependent phosphorylation of N-acetyl-L-glutamate. This Bacillus cereus (strain 03BB102) protein is Acetylglutamate kinase.